We begin with the raw amino-acid sequence, 329 residues long: Cytosolic arginine sensor for mTORC1 subunit 1 (329 aa).

Position 14 is a phosphoserine (S14). ACT domains lie at 72–138 and 260–321; these read AEAT…HTLA and GELW…EVLQ. L-arginine contacts are provided by residues 111–112, G274, 280–281, and 300–304; these read SV, IV, and TFNFD.

The protein belongs to the GATS family. Forms homodimers and heterodimers with CASTOR2. Interacts with the GATOR2 complex which is composed of MIOS, SEC13, SEH1L, WDR24 and WDR59; the interaction is negatively regulated by arginine. Interacts with TM4SF5; the interaction is positively regulated by leucine and is negatively regulated by arginine. In terms of processing, phosphorylation at Ser-14 by AKT1, promoting the interaction between CASTOR1 and RNF167. Ubiquitinated by RNF167 via 'Lys-29'-polyubiquitination, leading to its degradation, releasing the GATOR2 complex. Ubiquitination by RNF167 is promoted by phosphorylation at Ser-14 by AKT1.

It is found in the cytoplasm. Its subcellular location is the cytosol. Functions as an intracellular arginine sensor within the amino acid-sensing branch of the TORC1 signaling pathway. As a homodimer or a heterodimer with CASTOR2, binds and inhibits the GATOR subcomplex GATOR2 and thereby mTORC1. Binding of arginine to CASTOR1 allosterically disrupts the interaction of CASTOR1-containing dimers with GATOR2 which can in turn activate mTORC1 and the TORC1 signaling pathway. In Bos taurus (Bovine), this protein is Cytosolic arginine sensor for mTORC1 subunit 1.